The sequence spans 358 residues: Trans-anol O-methyltransferase 1 (358 aa).

Residues Gly201, Asp224, Asp244, Met245, and Arg259 each contribute to the S-adenosyl-L-methionine site. His262 acts as the Proton acceptor in catalysis.

The protein belongs to the class I-like SAM-binding methyltransferase superfamily. Cation-independent O-methyltransferase family. COMT subfamily. As to expression, highly expressed in developing fruits. Expressed at low levels in roots, young leaves, buds and flowers.

It catalyses the reaction (E)-anol + S-adenosyl-L-methionine = (E)-anethole + S-adenosyl-L-homocysteine + H(+). The catalysed reaction is (E)-isoeugenol + S-adenosyl-L-methionine = (E)-isomethyleugenol + S-adenosyl-L-homocysteine + H(+). Its pathway is aromatic compound metabolism; phenylpropanoid biosynthesis. With respect to regulation, inhibited by zinc and copper. Phenylpropene O-methyltransferase that catalyzes the conversion of trans-anol to trans-anethole and isoeugenol to isomethyleugenol. Phenylpropenes are the primary constituents of various essential plant oils. They are produced as antimicrobial and antianimal compounds, or as floral attractants of pollinators. This is Trans-anol O-methyltransferase 1 (AIMT1) from Pimpinella anisum (Anise).